We begin with the raw amino-acid sequence, 88 residues long: Chaplin-F (88 aa).

The first 36 residues, 1 to 36 (MYNPKEHFSMSRIAKGLALTSVAAAAVAGTAGVAAA), serve as a signal peptide directing secretion. Residues 47–87 (SPGVLSGNVVQVPVHIPVNVCGNTIDVIGLLNPAFGNECEN) enclose the Chaplin domain. Cysteines 67 and 85 form a disulfide.

The protein belongs to the chaplin family. Short chaplin subfamily. In terms of assembly, homodimer; disulfide linked. About 20% of ChpF isolated from cell wall forms disulfide-bonded homodimers.

Its subcellular location is the cell surface. The protein localises to the secreted. It localises to the cell wall. The protein resides in the fimbrium. In terms of biological role, one of 8 partially redundant surface-active proteins required for efficient formation of aerial mycelium; the short chaplins assemble into a hydrophobic, amyloidal fibrillar surface layer that envelopes and protects aerial hyphae and spores, presumably anchored to the long chaplins. Chaplins have an overlapping function with the surface-active SapB peptide; chaplins are essential on minimal medium while on rich medium both chaplins and SapB are required for efficient aerial hyphae formation. Chaplins are also involved in cell attachment to a hydrophobic surface. Forms amyloid fibrils in vitro probably composed of stacked beta-sheets, at low extracellular concentrations individually restores the ability to form aerial hyphae to a chaplin-deficient strain. A small chaplin extract (ChpD, ChpE, ChpF, ChpG and ChpH) self-assembles into 2 different amyloids; small fibrils at the air-water interface form an amphipathic membrane that resembles spore-surface structures involved in aerial hyphae formation, and hydrophilic fibrils in solution that resemble the fibers that attach cells to a hydrophobic surface. At the air-water interface the hydrophilic surface is in contact with water (probably equivalent to the peptidoglycan layer), while the hydrophobic face is exposed to the air, making the surface of the aerial hyphae hydrophobic. A small chaplin extract applied to a chaplin-deficient strain restores aerial hyphae formation. The small chaplin extract forms an amyloid-like structure similar to that seen on the surface of cells without rodlets (rdlA-rdlB deletions), and is highly surface active, reducing surface tension from 72 to 26 mJ/m(2), which probably allows escape of hyphae from an aqueous environment into air. ChpF alone is less surface active at pH 3.0 than at pH 10.0, it reduces the surface tension of water from 72.8 mN/m to 50 mN/m at pH 3.0 or to 37 mN/m at pH 10.0. ChpF and ChpG are sufficient to restore the rodlet layer and hydrophobicity to a strain deleted for the other 6 chaplin genes. The protein is Chaplin-F of Streptomyces coelicolor (strain ATCC BAA-471 / A3(2) / M145).